We begin with the raw amino-acid sequence, 620 residues long: Translation initiation factor IF-2 (620 aa).

One can recognise a tr-type G domain in the interval 119 to 288 (ERPPIVTIMG…IILISELENL (170 aa)). Residues 128-135 (GHVDHGKT) are G1. Residue 128–135 (GHVDHGKT) coordinates GTP. The segment at 153–157 (GITQA) is G2. Residues 175–178 (DTPG) are G3. Residues 175–179 (DTPGH) and 229–232 (NKID) contribute to the GTP site. The interval 229-232 (NKID) is G4. Residues 265-267 (SAI) are G5.

This sequence belongs to the TRAFAC class translation factor GTPase superfamily. Classic translation factor GTPase family. IF-2 subfamily.

It is found in the cytoplasm. One of the essential components for the initiation of protein synthesis. Protects formylmethionyl-tRNA from spontaneous hydrolysis and promotes its binding to the 30S ribosomal subunits. Also involved in the hydrolysis of GTP during the formation of the 70S ribosomal complex. The chain is Translation initiation factor IF-2 from Mycoplasma capricolum subsp. capricolum (strain California kid / ATCC 27343 / NCTC 10154).